We begin with the raw amino-acid sequence, 348 residues long: RNA 3'-terminal phosphate cyclase (348 aa).

ATP-binding positions include Gln107 and 290-294 (HLADQ). The Tele-AMP-histidine intermediate role is filled by His316.

This sequence belongs to the RNA 3'-terminal cyclase family. Type 1 subfamily.

It is found in the cytoplasm. The enzyme catalyses a 3'-end 3'-phospho-ribonucleotide-RNA + ATP = a 3'-end 2',3'-cyclophospho-ribonucleotide-RNA + AMP + diphosphate. Functionally, catalyzes the conversion of 3'-phosphate to a 2',3'-cyclic phosphodiester at the end of RNA. The mechanism of action of the enzyme occurs in 3 steps: (A) adenylation of the enzyme by ATP; (B) transfer of adenylate to an RNA-N3'P to produce RNA-N3'PP5'A; (C) and attack of the adjacent 2'-hydroxyl on the 3'-phosphorus in the diester linkage to produce the cyclic end product. The biological role of this enzyme is unknown but it is likely to function in some aspects of cellular RNA processing. This Nostoc sp. (strain PCC 7120 / SAG 25.82 / UTEX 2576) protein is RNA 3'-terminal phosphate cyclase (rtcA).